The primary structure comprises 246 residues: NAD(P)H-quinone oxidoreductase subunit K, organellar chromatophore (246 aa).

The [4Fe-4S] cluster site is built by cysteine 58, cysteine 59, cysteine 123, and cysteine 154.

It belongs to the complex I 20 kDa subunit family. NDH-1 is composed of 14 different subunits. Subunits nuoB, C, D, E, F, and G constitute the peripheral sector of the complex. [4Fe-4S] cluster serves as cofactor.

The protein localises to the plastid. The protein resides in the organellar chromatophore thylakoid membrane. The enzyme catalyses a quinone + NADH + H(+) = a quinol + NAD(+). Its function is as follows. NDH-1 shuttles electrons from NADH, via FMN and iron-sulfur (Fe-S) centers, to quinones in the respiratory chain. Couples the redox reaction to proton translocation (for every two electrons transferred, four hydrogen ions are translocated across the cytoplasmic membrane), and thus conserves the redox energy in a proton gradient. The sequence is that of NAD(P)H-quinone oxidoreductase subunit K, organellar chromatophore from Paulinella chromatophora.